The sequence spans 139 residues: Large-conductance mechanosensitive channel (139 aa).

The next 2 helical transmembrane spans lie at 14–34 (VVDM…VKSL) and 86–106 (GLFI…FLLI).

This sequence belongs to the MscL family. Homopentamer.

The protein resides in the cell inner membrane. In terms of biological role, channel that opens in response to stretch forces in the membrane lipid bilayer. May participate in the regulation of osmotic pressure changes within the cell. In Methylobacillus flagellatus (strain ATCC 51484 / DSM 6875 / VKM B-1610 / KT), this protein is Large-conductance mechanosensitive channel.